Reading from the N-terminus, the 81-residue chain is Cytochrome b559 subunit alpha (81 aa).

The chain crosses the membrane as a helical span at residues 21-35; that stretch reads VIHSITIPSLFVSGW. Residue histidine 23 participates in heme binding.

The protein belongs to the PsbE/PsbF family. Heterodimer of an alpha subunit and a beta subunit. PSII is composed of 1 copy each of membrane proteins PsbA, PsbB, PsbC, PsbD, PsbE, PsbF, PsbH, PsbI, PsbJ, PsbK, PsbL, PsbM, PsbT, PsbX, PsbY, PsbZ, Psb30/Ycf12, at least 3 peripheral proteins of the oxygen-evolving complex and a large number of cofactors. It forms dimeric complexes. It depends on heme b as a cofactor.

Its subcellular location is the plastid. It is found in the chloroplast thylakoid membrane. Functionally, this b-type cytochrome is tightly associated with the reaction center of photosystem II (PSII). PSII is a light-driven water:plastoquinone oxidoreductase that uses light energy to abstract electrons from H(2)O, generating O(2) and a proton gradient subsequently used for ATP formation. It consists of a core antenna complex that captures photons, and an electron transfer chain that converts photonic excitation into a charge separation. In Mesostigma viride (Green alga), this protein is Cytochrome b559 subunit alpha.